Consider the following 218-residue polypeptide: Recombination protein RecR (218 aa).

The C4-type zinc finger occupies 56-71 (CRICCNISREEVCRIC). The Toprim domain maps to 79–195 (STICVVEEPK…VVSRLASGMP (117 aa)).

The protein belongs to the RecR family.

In terms of biological role, may play a role in DNA repair. It seems to be involved in an RecBC-independent recombinational process of DNA repair. It may act with RecF and RecO. The chain is Recombination protein RecR from Corynebacterium diphtheriae (strain ATCC 700971 / NCTC 13129 / Biotype gravis).